The chain runs to 498 residues: Histidine--tRNA ligase (498 aa).

It belongs to the class-II aminoacyl-tRNA synthetase family. In terms of assembly, homodimer.

It localises to the cytoplasm. It catalyses the reaction tRNA(His) + L-histidine + ATP = L-histidyl-tRNA(His) + AMP + diphosphate + H(+). This Mycoplasmopsis synoviae (strain 53) (Mycoplasma synoviae) protein is Histidine--tRNA ligase.